The sequence spans 359 residues: MEVRVAGVRKEFARFPALHNVSLTIQSGELIALLGPSGSGKTTLLRLIAGLETPTEGMIFFGDEDASQKSVQERNVGFVFQHYALFRHMTVADNIGFGLKVRPGGTRPSTAEIRRRALELLDLVQLSGLEKRYPAQLSGGQRQRVALARAMAIEPRVLLLDEPFGALDAQVRKELRRWLREIHDKTGHTTVFVTHDQDEALELADRVVVMSQGRIEQVGTPDEVYDKPNSPFVYGFIGESSTLPVRVENGEVWLADRNIGLGAENMPDGDAQLYFRPHDVELLDGCGGCIAGTVIASRRSGGKRRVELEVGGARERIEIEIPAEHPAAEKSRIAFRPRYWTLFRAGDSELPAPKAAATT.

The ABC transporter domain occupies 3–237; the sequence is VRVAGVRKEF…PNSPFVYGFI (235 aa). 35-42 serves as a coordination point for ATP; sequence GPSGSGKT.

The protein belongs to the ABC transporter superfamily. Sulfate/tungstate importer (TC 3.A.1.6) family. As to quaternary structure, the complex is composed of two ATP-binding proteins (CysA), two transmembrane proteins (CysT and CysW) and a solute-binding protein (CysP).

It localises to the cell inner membrane. The catalysed reaction is sulfate(out) + ATP + H2O = sulfate(in) + ADP + phosphate + H(+). It carries out the reaction thiosulfate(out) + ATP + H2O = thiosulfate(in) + ADP + phosphate + H(+). In terms of biological role, part of the ABC transporter complex CysAWTP involved in sulfate/thiosulfate import. Responsible for energy coupling to the transport system. This is Sulfate/thiosulfate import ATP-binding protein CysA from Brucella melitensis biotype 1 (strain ATCC 23456 / CCUG 17765 / NCTC 10094 / 16M).